The primary structure comprises 492 residues: Virion host shutoff protein (492 aa).

Disordered stretches follow at residues 110–130 (EEASDVDASPPPSPITDSRPS), 143–165 (FAPGDRGTRAAGPGPAAPSGAPS), 288–307 (SQARRAARRERANSRSLESM), and 334–369 (EDDYEEDPPLQPPDVAGGPRDGARSSSSEILTPPEL). Low complexity predominate over residues 144–165 (APGDRGTRAAGPGPAAPSGAPS).

This sequence belongs to the herpesviridae VHS protein family. Interacts with human EIF4H, EIF4A1 and EIF4A2; interaction with eIF4AI and EIF4A2 presumably allows Vhs protein to associate with the eIF4F cap-binding complex.

The protein localises to the virion. Functionally, minor structural protein that acts as an endoribonuclease during lytic infection. Degrades host mRNAs in the cytoplasm by cutting them at preferred sites, including some in regions of translation initiation. Together with inhibition of host splicing by ICP27, contributes to an overall decrease in host protein synthesis. Also, after the onset of viral transcription, accelerates the turnover of viral mRNA, thereby facilitating the sequential expression of different classes of viral genes. Binds translation initiation factors eIF4H, eIF4AI, and eIF4AII, thereby may interact directly with the translation initiation complex and thus digest specifically mRNAs. Also impedes antigen presentation by major histocompatibility complex class I and class II molecules, inhibits secretion of cytokines that would otherwise recruit lymphocytes and neutrophils cells to the site of infection and blocks the activation of dendritic cells. Impedes the alpha/beta interferon-mediated response to infection. Inhibits the integrated stress response (ISR) in the infected cell, this function requires the endonuclease activity. Stress granule formation is thus inhibited, which allows protein synthesis and viral replication. The chain is Virion host shutoff protein (UL41) from Human herpesvirus 2 (strain G) (HHV-2).